The following is a 369-amino-acid chain: Histidinol-phosphate aminotransferase 3 (369 aa).

An N6-(pyridoxal phosphate)lysine modification is found at Lys-220.

The protein belongs to the class-II pyridoxal-phosphate-dependent aminotransferase family. Histidinol-phosphate aminotransferase subfamily. As to quaternary structure, homodimer. Pyridoxal 5'-phosphate serves as cofactor.

The enzyme catalyses L-histidinol phosphate + 2-oxoglutarate = 3-(imidazol-4-yl)-2-oxopropyl phosphate + L-glutamate. It participates in amino-acid biosynthesis; L-histidine biosynthesis; L-histidine from 5-phospho-alpha-D-ribose 1-diphosphate: step 7/9. The protein is Histidinol-phosphate aminotransferase 3 (hisC3) of Mesorhizobium japonicum (strain LMG 29417 / CECT 9101 / MAFF 303099) (Mesorhizobium loti (strain MAFF 303099)).